The primary structure comprises 397 residues: MARAPLDWIDRELEALEAKGLRRALEPLASPQGPVVEVGGRRLVNLCSNDYLGLAADPRLRSAAAEAAEREGAGSGASRLVAGDLPVHGALERAIAGHAGTEAALLFGSGYHANAGVPPALVGRDDAVFSDVLNHASIVDGCLLSRAKLVRYRHADVQELADLLAGTPARRKLVVTDAIFSMDGDAAPLREIAGLCDRHGAMLYVDEAHATGVLGPRGGGLAEALGVADRVDVHMGTLGKALGAAGAFVAGERRLVDLLVSRARTFVFTTAPAPAASAAALAALAIVEAEPERRARVLALAARMRVGLERLGFDVSRVAAPIFPVILGDEARAVAASRALRERGFFVRAIRPPTVPRGTSRLRVTLTAAHGEAQVDAFLGALEEVLRVPGGGAPRVL.

Residue Arg23 coordinates substrate. 110–111 (GY) is a pyridoxal 5'-phosphate binding site. His135 serves as a coordination point for substrate. Pyridoxal 5'-phosphate-binding residues include Ser181, His209, and Thr237. Residue Lys240 is modified to N6-(pyridoxal phosphate)lysine. Residue Thr354 coordinates substrate.

It belongs to the class-II pyridoxal-phosphate-dependent aminotransferase family. BioF subfamily. As to quaternary structure, homodimer. Requires pyridoxal 5'-phosphate as cofactor.

It carries out the reaction 6-carboxyhexanoyl-[ACP] + L-alanine + H(+) = (8S)-8-amino-7-oxononanoate + holo-[ACP] + CO2. It participates in cofactor biosynthesis; biotin biosynthesis. Its function is as follows. Catalyzes the decarboxylative condensation of pimeloyl-[acyl-carrier protein] and L-alanine to produce 8-amino-7-oxononanoate (AON), [acyl-carrier protein], and carbon dioxide. The protein is 8-amino-7-oxononanoate synthase of Anaeromyxobacter sp. (strain Fw109-5).